The chain runs to 1461 residues: Pleiotropic drug resistance protein 2 (1461 aa).

The region spanning 172 to 445 is the ABC transporter 1 domain; that stretch reads LGLIHLSPSK…FEYMGFRCPE (274 aa). 205-212 contacts ATP; sequence GPPGSGKT. The 214-residue stretch at 523–736 folds into the ABC transmembrane type-2 1 domain; it reads ELFKSCFTRE…GQNAIAINEF (214 aa). The next 6 membrane-spanning stretches (helical) occupy residues 541 to 561, 577 to 597, 622 to 642, 660 to 680, 685 to 705, and 771 to 791; these read FLYIFKTTQITIMATIALTVF, FWGALFFSLINVMFNGMQELA, LPIWVLKIPISLVESAIWIIL, LLAFIGVHQMALSLFRFIAAA, VVANTLGTFTLLMVFILGGFI, and ISIGALFGFSLLFNVLFIAAL. In terms of domain architecture, ABC transporter 2 spans 859–1111; it reads LAFNHVNYYV…KLVEYFETIP (253 aa). Residue 904 to 911 coordinates ATP; the sequence is GVSGAGKT. One can recognise an ABC transmembrane type-2 2 domain in the interval 1184–1398; that stretch reads TQCKACFWKQ…TIYGIFASQV (215 aa). Helical transmembrane passes span 1203-1223, 1243-1263, 1291-1311, 1321-1341, 1348-1368, 1379-1399, and 1430-1450; these read YNAIRFFMTVIIGILFGVIFW, YAAVMFLGATNASAVQSVVAI, TIYVAIQTFVYSLLLFSMIGY, FYYFIFMCFTYFSMYGMMVVA, IAAIVMSFFLSFWNLFSGFLI, WYYWASPVAWTIYGIFASQVG, and FLLVVVFAHVGWVLLFFFVFA.

This sequence belongs to the ABC transporter superfamily. ABCG family. PDR (TC 3.A.1.205) subfamily.

Its subcellular location is the membrane. Its function is as follows. May be a general defense protein. The protein is Pleiotropic drug resistance protein 2 (PDR2) of Nicotiana plumbaginifolia (Leadwort-leaved tobacco).